The primary structure comprises 417 residues: Serine hydroxymethyltransferase (417 aa).

Residues Leu-122 and 126 to 128 (GHL) contribute to the (6S)-5,6,7,8-tetrahydrofolate site. N6-(pyridoxal phosphate)lysine is present on Lys-230. 355 to 357 (SPF) provides a ligand contact to (6S)-5,6,7,8-tetrahydrofolate.

This sequence belongs to the SHMT family. Homodimer. It depends on pyridoxal 5'-phosphate as a cofactor.

It is found in the cytoplasm. It carries out the reaction (6R)-5,10-methylene-5,6,7,8-tetrahydrofolate + glycine + H2O = (6S)-5,6,7,8-tetrahydrofolate + L-serine. It functions in the pathway one-carbon metabolism; tetrahydrofolate interconversion. Its pathway is amino-acid biosynthesis; glycine biosynthesis; glycine from L-serine: step 1/1. Functionally, catalyzes the reversible interconversion of serine and glycine with tetrahydrofolate (THF) serving as the one-carbon carrier. This reaction serves as the major source of one-carbon groups required for the biosynthesis of purines, thymidylate, methionine, and other important biomolecules. Also exhibits THF-independent aldolase activity toward beta-hydroxyamino acids, producing glycine and aldehydes, via a retro-aldol mechanism. This Francisella tularensis subsp. holarctica (strain LVS) protein is Serine hydroxymethyltransferase.